The chain runs to 399 residues: Zinc finger HIT domain-containing protein 2 (399 aa).

Residue M1 is modified to N-acetylmethionine. The Zn(2+) site is built by C7, C10, C22, C25, C30, C34, H38, and C41. Residues 7–41 form an HIT-type zinc finger; the sequence is CGFCPTGEAQPARYTCPRCNVPYCSLRCYRAHGSC. Disordered regions lie at residues 71–97 and 141–166; these read LRQQRETEDEPGDAGLRPGPAPGGLSG and EELGDAPSGDAEELEPSPARMPPEPV.

Interacts (via HIT-type zinc finger) with RUVBL2 in the presence of ATP or ADP; shows a stronger interaction in the presence of ADP.

Its function is as follows. May act as a bridging factor mediating the interaction between the R2TP/Prefoldin-like (R2TP/PFDL) complex and U5 small nuclear ribonucleoprotein (U5 snRNP). Required for the interaction of R2TP complex subunit RPAP3 and prefoldin-like subunit URI1 with U5 snRNP proteins EFTUD2 and PRPF8. May play a role in regulating the composition of the U5 snRNP complex. This is Zinc finger HIT domain-containing protein 2 (ZNHIT2) from Bos taurus (Bovine).